A 550-amino-acid chain; its full sequence is Glucose-6-phosphate isomerase (550 aa).

E355 serves as the catalytic Proton donor. Residues H386 and K512 contribute to the active site.

Belongs to the GPI family.

Its subcellular location is the cytoplasm. It carries out the reaction alpha-D-glucose 6-phosphate = beta-D-fructose 6-phosphate. It participates in carbohydrate biosynthesis; gluconeogenesis. The protein operates within carbohydrate degradation; glycolysis; D-glyceraldehyde 3-phosphate and glycerone phosphate from D-glucose: step 2/4. Catalyzes the reversible isomerization of glucose-6-phosphate to fructose-6-phosphate. The sequence is that of Glucose-6-phosphate isomerase from Rhodococcus opacus (strain B4).